Here is a 147-residue protein sequence, read N- to C-terminus: Flagellar assembly factor FliW (147 aa).

It belongs to the FliW family. In terms of assembly, interacts with translational regulator CsrA and flagellin(s).

It localises to the cytoplasm. In terms of biological role, acts as an anti-CsrA protein, binds CsrA and prevents it from repressing translation of its target genes, one of which is flagellin. Binds to flagellin and participates in the assembly of the flagellum. The sequence is that of Flagellar assembly factor FliW from Oceanobacillus iheyensis (strain DSM 14371 / CIP 107618 / JCM 11309 / KCTC 3954 / HTE831).